The chain runs to 906 residues: ATP-dependent DNA helicase PIF1 (906 aa).

Disordered stretches follow at residues 77–146 (DSEI…SSTF) and 229–297 (LEGS…PFKV). The span at 78–87 (SEIKESDDLS) shows a compositional bias: basic and acidic residues. Polar residues predominate over residues 88–119 (KGQSHVYNGSPVTKNSILQIEKQQIQKSPRPT). The segment covering 120 to 132 (ETNKRMQIRKDPD) has biased composition (basic and acidic residues). Residues 234–261 (NKVQADNASPFRITSSFSSPSQIQNQGV) are compositionally biased toward polar residues. Over residues 273 to 291 (QNVSSASQSSSPPMTVSQV) the composition is skewed to low complexity. An ATP-binding site is contributed by 390-397 (GSAGTGKS). A DNA-binding region spans residues 840–859 (QAYVALSRAVSRAGLQVLNF).

Belongs to the helicase family. PIF1 subfamily. Monomer. Interacts with telomerase. Mg(2+) is required as a cofactor.

The protein localises to the nucleus. It localises to the mitochondrion. The enzyme catalyses Couples ATP hydrolysis with the unwinding of duplex DNA at the replication fork by translocating in the 5'-3' direction. This creates two antiparallel DNA single strands (ssDNA). The leading ssDNA polymer is the template for DNA polymerase III holoenzyme which synthesizes a continuous strand.. The catalysed reaction is ATP + H2O = ADP + phosphate + H(+). Its function is as follows. DNA-dependent ATPase and 5'-3' DNA helicase required for the maintenance of both mitochondrial and nuclear genome stability. Efficiently unwinds G-quadruplex (G4) DNA structures and forked RNA-DNA hybrids. Resolves G4 structures, preventing replication pausing and double-strand breaks (DSBs) at G4 motifs. Involved in the maintenance of telomeric DNA. Inhibits telomere elongation, de novo telomere formation and telomere addition to DSBs via catalytic inhibition of telomerase. Reduces the processivity of telomerase by displacing active telomerase from DNA ends. Releases telomerase by unwinding the short telomerase RNA/telomeric DNA hybrid that is the intermediate in the telomerase reaction. Involved in the maintenance of ribosomal (rDNA). Required for efficient fork arrest at the replication fork barrier within rDNA. Involved in the maintenance of mitochondrial (mtDNA). Required to maintain mtDNA under conditions that introduce dsDNA breaks in mtDNA, either preventing or repairing dsDNA breaks. May inhibit replication progression to allow time for repair. May have a general role in chromosomal replication by affecting Okazaki fragment maturation. May have a role in conjunction with DNA2 helicase/nuclease in 5'-flap extension during Okazaki fragment processing. This is ATP-dependent DNA helicase PIF1 from Candida albicans (strain SC5314 / ATCC MYA-2876) (Yeast).